Here is a 299-residue protein sequence, read N- to C-terminus: Ribosomal RNA small subunit methyltransferase H (299 aa).

Residues 36–38 (GGH), Asp55, Asp103, and Gln110 contribute to the S-adenosyl-L-methionine site. Composition is skewed to basic and acidic residues over residues 268–282 (KPVR…ENPR) and 289–299 (RAAERIEKGGD). Positions 268–299 (KPVRPSEEEIRENPRARSGRLRAAERIEKGGD) are disordered.

Belongs to the methyltransferase superfamily. RsmH family.

The protein resides in the cytoplasm. It carries out the reaction cytidine(1402) in 16S rRNA + S-adenosyl-L-methionine = N(4)-methylcytidine(1402) in 16S rRNA + S-adenosyl-L-homocysteine + H(+). Its function is as follows. Specifically methylates the N4 position of cytidine in position 1402 (C1402) of 16S rRNA. The polypeptide is Ribosomal RNA small subunit methyltransferase H (Thermotoga sp. (strain RQ2)).